We begin with the raw amino-acid sequence, 233 residues long: Large ribosomal subunit protein uL1 (233 aa).

It belongs to the universal ribosomal protein uL1 family. Part of the 50S ribosomal subunit.

Its function is as follows. Binds directly to 23S rRNA. The L1 stalk is quite mobile in the ribosome, and is involved in E site tRNA release. In terms of biological role, protein L1 is also a translational repressor protein, it controls the translation of the L11 operon by binding to its mRNA. The protein is Large ribosomal subunit protein uL1 of Vibrio campbellii (strain ATCC BAA-1116).